Reading from the N-terminus, the 364-residue chain is Flagellar P-ring protein (364 aa).

Positions 1–29 are cleaved as a signal peptide; it reads MKTIGGKVFRHAAILAACVLPLWCQPALA.

Belongs to the FlgI family. The basal body constitutes a major portion of the flagellar organelle and consists of four rings (L,P,S, and M) mounted on a central rod.

It is found in the periplasm. The protein localises to the bacterial flagellum basal body. Its function is as follows. Assembles around the rod to form the L-ring and probably protects the motor/basal body from shearing forces during rotation. This chain is Flagellar P-ring protein, found in Dechloromonas aromatica (strain RCB).